Here is a 161-residue protein sequence, read N- to C-terminus: Large ribosomal subunit protein uL10 (161 aa).

Belongs to the universal ribosomal protein uL10 family. Part of the ribosomal stalk of the 50S ribosomal subunit. The N-terminus interacts with L11 and the large rRNA to form the base of the stalk. The C-terminus forms an elongated spine to which L12 dimers bind in a sequential fashion forming a multimeric L10(L12)X complex.

Forms part of the ribosomal stalk, playing a central role in the interaction of the ribosome with GTP-bound translation factors. The chain is Large ribosomal subunit protein uL10 from Campylobacter fetus subsp. fetus (strain 82-40).